Consider the following 458-residue polypeptide: ATP synthase subunit beta (458 aa).

148–155 is an ATP binding site; that stretch reads GGAGVGKT.

The protein belongs to the ATPase alpha/beta chains family. F-type ATPases have 2 components, CF(1) - the catalytic core - and CF(0) - the membrane proton channel. CF(1) has five subunits: alpha(3), beta(3), gamma(1), delta(1), epsilon(1). CF(0) has three main subunits: a(1), b(2) and c(9-12). The alpha and beta chains form an alternating ring which encloses part of the gamma chain. CF(1) is attached to CF(0) by a central stalk formed by the gamma and epsilon chains, while a peripheral stalk is formed by the delta and b chains.

Its subcellular location is the cell inner membrane. The enzyme catalyses ATP + H2O + 4 H(+)(in) = ADP + phosphate + 5 H(+)(out). Produces ATP from ADP in the presence of a proton gradient across the membrane. The catalytic sites are hosted primarily by the beta subunits. In Ectopseudomonas mendocina (strain ymp) (Pseudomonas mendocina), this protein is ATP synthase subunit beta.